The following is a 396-amino-acid chain: Phosphoglycerate kinase (396 aa).

Residues 21-23 (DFN), Arg-36, 59-62 (HLGK), Arg-119, and Arg-156 each bind substrate. ATP contacts are provided by residues Lys-206, Gly-294, Glu-325, and 352–355 (GGDS).

Belongs to the phosphoglycerate kinase family. Monomer.

The protein resides in the cytoplasm. The enzyme catalyses (2R)-3-phosphoglycerate + ATP = (2R)-3-phospho-glyceroyl phosphate + ADP. It functions in the pathway carbohydrate degradation; glycolysis; pyruvate from D-glyceraldehyde 3-phosphate: step 2/5. The polypeptide is Phosphoglycerate kinase (Listeria innocua serovar 6a (strain ATCC BAA-680 / CLIP 11262)).